A 147-amino-acid chain; its full sequence is Large ribosomal subunit protein bL9 (147 aa).

Belongs to the bacterial ribosomal protein bL9 family.

Binds to the 23S rRNA. This chain is Large ribosomal subunit protein bL9, found in Campylobacter hominis (strain ATCC BAA-381 / DSM 21671 / CCUG 45161 / LMG 19568 / NCTC 13146 / CH001A).